A 326-amino-acid chain; its full sequence is Tetraacyldisaccharide 4'-kinase (326 aa).

53 to 60 lines the ATP pocket; the sequence is SVGGNGKT.

The protein belongs to the LpxK family.

It carries out the reaction a lipid A disaccharide + ATP = a lipid IVA + ADP + H(+). The protein operates within glycolipid biosynthesis; lipid IV(A) biosynthesis; lipid IV(A) from (3R)-3-hydroxytetradecanoyl-[acyl-carrier-protein] and UDP-N-acetyl-alpha-D-glucosamine: step 6/6. Functionally, transfers the gamma-phosphate of ATP to the 4'-position of a tetraacyldisaccharide 1-phosphate intermediate (termed DS-1-P) to form tetraacyldisaccharide 1,4'-bis-phosphate (lipid IVA). The sequence is that of Tetraacyldisaccharide 4'-kinase from Actinobacillus pleuropneumoniae serotype 7 (strain AP76).